We begin with the raw amino-acid sequence, 474 residues long: Ribulose bisphosphate carboxylase large chain (474 aa).

Positions 122 and 172 each coordinate substrate. The active-site Proton acceptor is K174. A substrate-binding site is contributed by K176. K200, D202, and E203 together coordinate Mg(2+). An N6-carboxylysine modification is found at K200. Catalysis depends on H293, which acts as the Proton acceptor. Residues R294, H326, and S378 each contribute to the substrate site.

This sequence belongs to the RuBisCO large chain family. Type I subfamily. Heterohexadecamer of 8 large chains and 8 small chains; disulfide-linked. The disulfide link is formed within the large subunit homodimers. It depends on Mg(2+) as a cofactor. Post-translationally, the disulfide bond which can form in the large chain dimeric partners within the hexadecamer appears to be associated with oxidative stress and protein turnover.

The protein localises to the carboxysome. The catalysed reaction is 2 (2R)-3-phosphoglycerate + 2 H(+) = D-ribulose 1,5-bisphosphate + CO2 + H2O. It carries out the reaction D-ribulose 1,5-bisphosphate + O2 = 2-phosphoglycolate + (2R)-3-phosphoglycerate + 2 H(+). Its function is as follows. RuBisCO catalyzes two reactions: the carboxylation of D-ribulose 1,5-bisphosphate, the primary event in carbon dioxide fixation, as well as the oxidative fragmentation of the pentose substrate in the photorespiration process. Both reactions occur simultaneously and in competition at the same active site. The polypeptide is Ribulose bisphosphate carboxylase large chain (Synechococcus sp. (strain JA-3-3Ab) (Cyanobacteria bacterium Yellowstone A-Prime)).